We begin with the raw amino-acid sequence, 386 residues long: 2-deoxy-scyllo-inosose synthase (386 aa).

NAD(+) is bound by residues D42, 73–76 (EEHK), 105–109 (GVTGN), 129–130 (TT), 140–142 (SLK), and 151–152 (KN). K142 is a catalytic residue. E184 contributes to the Co(2+) binding site. The active site involves E244. Co(2+) is bound by residues H247 and H263.

The protein belongs to the sugar phosphate cyclases superfamily. DOI synthase family. NAD(+) is required as a cofactor. Co(2+) serves as cofactor.

The enzyme catalyses D-glucose 6-phosphate = 2-deoxy-L-scyllo-inosose + phosphate. It functions in the pathway metabolic intermediate biosynthesis; 2-deoxystreptamine biosynthesis; 2-deoxystreptamine from D-glucose 6-phosphate: step 1/4. It participates in antibiotic biosynthesis; tobramycin biosynthesis. Functionally, catalyzes the intramolecular carbocycle formation from D-glucose-6-phosphate to 2-deoxy-scyllo-inosose (DOI). The protein is 2-deoxy-scyllo-inosose synthase (tbmA) of Streptoalloteichus tenebrarius (strain ATCC 17920 / DSM 40477 / JCM 4838 / CBS 697.72 / NBRC 16177 / NCIMB 11028 / NRRL B-12390 / A12253. 1 / ISP 5477) (Streptomyces tenebrarius).